The following is a 120-amino-acid chain: NAD(P)H-quinone oxidoreductase subunit 3 (120 aa).

A run of 3 helical transmembrane segments spans residues 6–26 (GYDA…LALV), 64–84 (MFAL…PWAV), and 89–109 (LGLL…VALA).

It belongs to the complex I subunit 3 family. As to quaternary structure, NDH-1 can be composed of about 15 different subunits; different subcomplexes with different compositions have been identified which probably have different functions.

The protein localises to the cellular thylakoid membrane. The enzyme catalyses a plastoquinone + NADH + (n+1) H(+)(in) = a plastoquinol + NAD(+) + n H(+)(out). The catalysed reaction is a plastoquinone + NADPH + (n+1) H(+)(in) = a plastoquinol + NADP(+) + n H(+)(out). In terms of biological role, NDH-1 shuttles electrons from an unknown electron donor, via FMN and iron-sulfur (Fe-S) centers, to quinones in the respiratory and/or the photosynthetic chain. The immediate electron acceptor for the enzyme in this species is believed to be plastoquinone. Couples the redox reaction to proton translocation, and thus conserves the redox energy in a proton gradient. Cyanobacterial NDH-1 also plays a role in inorganic carbon-concentration. The chain is NAD(P)H-quinone oxidoreductase subunit 3 from Synechococcus sp. (strain WH7803).